The sequence spans 68 residues: Antimicrobial peptide Eval418 (68 aa).

Positions 1 to 23 are cleaved as a signal peptide; the sequence is MRTQLAVLLVALVLLQMIAQSEA. Isoleucine amide is present on Ile36. Positions 37–68 are excised as a propeptide; it reads GKRGLRNLDDLDDVFDDDLSAADLEFLKQLMR.

The protein belongs to the non-disulfide-bridged peptide (NDBP) superfamily. Short antimicrobial peptide (group 4) family. As to expression, expressed by the venom gland.

It localises to the secreted. Probable antimicrobial peptide. Shows dose-dependent and time-dependent inactivation of herpes simplex virus type 1 (HSV-1) and dose-dependent inhibition of HSV-1 viral attachment to host cells. Scarcely suppress an established HSV-1 infection due to poor cellular uptake. This chain is Antimicrobial peptide Eval418, found in Euscorpiops validus (Scorpion).